Reading from the N-terminus, the 604-residue chain is Protein glass (604 aa).

Disordered stretches follow at residues 111 to 139 (ISTT…HGYW), 199 to 237 (NSHN…GGNN), 359 to 400 (LPPL…SPTS), and 414 to 434 (EDEE…GGEM). Low complexity-rich tracts occupy residues 117-126 (ASSGNGSSNN) and 200-237 (SHNH…GGNN). Positions 414–427 (EDEEDSNEDLDGDE) are enriched in acidic residues. C2H2-type zinc fingers lie at residues 437-459 (NLCR…LRTH), 465-487 (YRCP…VRTH), 493-515 (FRCP…MRTH), 521-543 (YRCS…LRIH), and 549-571 (YQCK…MRVH). Positions 566–604 (RHMRVHGNNNSSNGSNGATGVGGESSTGSGVGGGNSLLT) are disordered. Over residues 572-581 (GNNNSSNGSN) the composition is skewed to low complexity. A compositionally biased stretch (gly residues) spans 582–604 (GATGVGGESSTGSGVGGGNSLLT).

It localises to the nucleus. Functionally, transcription factor required for gene expression specific to photoreceptor cells. This is Protein glass (gl) from Drosophila melanogaster (Fruit fly).